A 207-amino-acid chain; its full sequence is Dephospho-CoA kinase (207 aa).

A DPCK domain is found at 10-207 (ILGLTGGIGS…FYLTLRGGQS (198 aa)). Residue 18-23 (GSGKSA) coordinates ATP.

It belongs to the CoaE family.

It localises to the cytoplasm. The enzyme catalyses 3'-dephospho-CoA + ATP = ADP + CoA + H(+). The protein operates within cofactor biosynthesis; coenzyme A biosynthesis; CoA from (R)-pantothenate: step 5/5. In terms of biological role, catalyzes the phosphorylation of the 3'-hydroxyl group of dephosphocoenzyme A to form coenzyme A. In Pseudomonas savastanoi pv. phaseolicola (strain 1448A / Race 6) (Pseudomonas syringae pv. phaseolicola (strain 1448A / Race 6)), this protein is Dephospho-CoA kinase.